We begin with the raw amino-acid sequence, 308 residues long: Aspartate carbamoyltransferase catalytic subunit (308 aa).

Arg-55 and Thr-56 together coordinate carbamoyl phosphate. Lys-84 contributes to the L-aspartate binding site. Carbamoyl phosphate contacts are provided by Arg-105, His-133, and Gln-136. Arg-167 and Arg-228 together coordinate L-aspartate. Carbamoyl phosphate-binding residues include Leu-267 and Pro-268.

Belongs to the aspartate/ornithine carbamoyltransferase superfamily. ATCase family. As to quaternary structure, heterooligomer of catalytic and regulatory chains.

The enzyme catalyses carbamoyl phosphate + L-aspartate = N-carbamoyl-L-aspartate + phosphate + H(+). Its pathway is pyrimidine metabolism; UMP biosynthesis via de novo pathway; (S)-dihydroorotate from bicarbonate: step 2/3. In terms of biological role, catalyzes the condensation of carbamoyl phosphate and aspartate to form carbamoyl aspartate and inorganic phosphate, the committed step in the de novo pyrimidine nucleotide biosynthesis pathway. The sequence is that of Aspartate carbamoyltransferase catalytic subunit from Methanocella arvoryzae (strain DSM 22066 / NBRC 105507 / MRE50).